The following is an 85-amino-acid chain: Large ribosomal subunit protein bL27 (85 aa).

The segment at 1 to 21 (MAHKKAGGSTRNGRDSNAQRL) is disordered. Positions 9–19 (STRNGRDSNAQ) are enriched in polar residues.

It belongs to the bacterial ribosomal protein bL27 family.

This Pectobacterium carotovorum subsp. carotovorum (strain PC1) protein is Large ribosomal subunit protein bL27.